We begin with the raw amino-acid sequence, 517 residues long: Bifunctional purine biosynthesis protein PurH (517 aa).

The MGS-like domain maps to 1 to 146 (MAPIALLSVS…KNHAHVAVLT (146 aa)).

The protein belongs to the PurH family.

The enzyme catalyses (6R)-10-formyltetrahydrofolate + 5-amino-1-(5-phospho-beta-D-ribosyl)imidazole-4-carboxamide = 5-formamido-1-(5-phospho-D-ribosyl)imidazole-4-carboxamide + (6S)-5,6,7,8-tetrahydrofolate. It carries out the reaction IMP + H2O = 5-formamido-1-(5-phospho-D-ribosyl)imidazole-4-carboxamide. It participates in purine metabolism; IMP biosynthesis via de novo pathway; 5-formamido-1-(5-phospho-D-ribosyl)imidazole-4-carboxamide from 5-amino-1-(5-phospho-D-ribosyl)imidazole-4-carboxamide (10-formyl THF route): step 1/1. The protein operates within purine metabolism; IMP biosynthesis via de novo pathway; IMP from 5-formamido-1-(5-phospho-D-ribosyl)imidazole-4-carboxamide: step 1/1. In Prochlorococcus marinus (strain MIT 9313), this protein is Bifunctional purine biosynthesis protein PurH.